Reading from the N-terminus, the 185-residue chain is Ribosome-recycling factor (185 aa).

Residues 137-158 (NQVKKLEKDKEISEDESKKAQE) form a disordered region. The span at 140 to 158 (KKLEKDKEISEDESKKAQE) shows a compositional bias: basic and acidic residues.

This sequence belongs to the RRF family.

Its subcellular location is the cytoplasm. Its function is as follows. Responsible for the release of ribosomes from messenger RNA at the termination of protein biosynthesis. May increase the efficiency of translation by recycling ribosomes from one round of translation to another. The polypeptide is Ribosome-recycling factor (Helicobacter pylori (strain P12)).